A 351-amino-acid chain; its full sequence is Photosystem II D2 protein (351 aa).

A helical transmembrane segment spans residues 39-59; it reads CAYLALGGWLTGTTFVTSWYT. A chlorophyll a-binding site is contributed by His116. The helical transmembrane segment at 123 to 139 threads the bilayer; the sequence is GFMLRQFEIARLVGIRP. Pheophytin a is bound by residues Gln128 and Asn141. The helical transmembrane segment at 151-164 threads the bilayer; that stretch reads VFVSVFLMYPLGQS. Position 196 (His196) interacts with chlorophyll a. A helical membrane pass occupies residues 206-226; the sequence is GALLCAIHGATVENTLFEDGE. 2 residues coordinate a plastoquinone: His213 and Phe260. His213 is a binding site for Fe cation. A Fe cation-binding site is contributed by His267. A helical membrane pass occupies residues 277-293; sequence GLWMSAIGIVGLALNLR.

This sequence belongs to the reaction center PufL/M/PsbA/D family. As to quaternary structure, PSII is composed of 1 copy each of membrane proteins PsbA, PsbB, PsbC, PsbD, PsbE, PsbF, PsbH, PsbI, PsbJ, PsbK, PsbL, PsbM, PsbT, PsbX, PsbY, PsbZ, Psb30/Ycf12, peripheral proteins PsbO, CyanoQ (PsbQ), PsbU, PsbV and a large number of cofactors. It forms dimeric complexes. The cofactor is The D1/D2 heterodimer binds P680, chlorophylls that are the primary electron donor of PSII, and subsequent electron acceptors. It shares a non-heme iron and each subunit binds pheophytin, quinone, additional chlorophylls, carotenoids and lipids. There is also a Cl(-1) ion associated with D1 and D2, which is required for oxygen evolution. The PSII complex binds additional chlorophylls, carotenoids and specific lipids..

Its subcellular location is the cellular thylakoid membrane. It carries out the reaction 2 a plastoquinone + 4 hnu + 2 H2O = 2 a plastoquinol + O2. Photosystem II (PSII) is a light-driven water:plastoquinone oxidoreductase that uses light energy to abstract electrons from H(2)O, generating O(2) and a proton gradient subsequently used for ATP formation. It consists of a core antenna complex that captures photons, and an electron transfer chain that converts photonic excitation into a charge separation. The D1/D2 (PsbA/PsbD) reaction center heterodimer binds P680, the primary electron donor of PSII as well as several subsequent electron acceptors. D2 is needed for assembly of a stable PSII complex. The protein is Photosystem II D2 protein of Crocosphaera subtropica (strain ATCC 51142 / BH68) (Cyanothece sp. (strain ATCC 51142)).